Consider the following 255-residue polypeptide: 1-(5-phosphoribosyl)-5-[(5-phosphoribosylamino)methylideneamino] imidazole-4-carboxamide isomerase (255 aa).

Asp8 serves as the catalytic Proton acceptor. Catalysis depends on Asp129, which acts as the Proton donor.

It belongs to the HisA/HisF family.

Its subcellular location is the cytoplasm. It catalyses the reaction 1-(5-phospho-beta-D-ribosyl)-5-[(5-phospho-beta-D-ribosylamino)methylideneamino]imidazole-4-carboxamide = 5-[(5-phospho-1-deoxy-D-ribulos-1-ylimino)methylamino]-1-(5-phospho-beta-D-ribosyl)imidazole-4-carboxamide. Its pathway is amino-acid biosynthesis; L-histidine biosynthesis; L-histidine from 5-phospho-alpha-D-ribose 1-diphosphate: step 4/9. The protein is 1-(5-phosphoribosyl)-5-[(5-phosphoribosylamino)methylideneamino] imidazole-4-carboxamide isomerase of Prochlorococcus marinus (strain MIT 9312).